The primary structure comprises 150 residues: Arginine repressor (150 aa).

Belongs to the ArgR family.

The protein resides in the cytoplasm. It functions in the pathway amino-acid biosynthesis; L-arginine biosynthesis [regulation]. In terms of biological role, regulates arginine biosynthesis genes. The protein is Arginine repressor of Thermoanaerobacter sp. (strain X514).